Reading from the N-terminus, the 249-residue chain is Probable transcriptional regulatory protein FN1661 (249 aa).

Polar residues predominate over residues 1–10 (MSGHSKWNNI). Residues 1 to 20 (MSGHSKWNNIQHRKGAQDKK) are disordered.

Belongs to the TACO1 family.

It is found in the cytoplasm. This is Probable transcriptional regulatory protein FN1661 from Fusobacterium nucleatum subsp. nucleatum (strain ATCC 25586 / DSM 15643 / BCRC 10681 / CIP 101130 / JCM 8532 / KCTC 2640 / LMG 13131 / VPI 4355).